The primary structure comprises 301 residues: uncharacterized protein (301 aa).

A signal peptide spans 1–26 (MKGFSCSRPGYLTGLLLLAVAPILTA). The N-palmitoyl cysteine moiety is linked to residue C27. C27 is lipidated: S-diacylglycerol cysteine. The region spanning 46–243 (KLKPATIEYW…YNAKINIWSH (198 aa)) is the TNase-like domain. Positions 64–136 (NYASEERRKE…SKGDSTGDEK (73 aa)) are disordered. Composition is skewed to basic and acidic residues over residues 67-95 (SEER…KTED) and 120-136 (TPEK…GDEK).

It is found in the cell membrane. This is an uncharacterized protein from Mycoplasma pneumoniae (strain ATCC 29342 / M129 / Subtype 1) (Mycoplasmoides pneumoniae).